The chain runs to 179 residues: Large ribosomal subunit protein uL5 (179 aa).

Belongs to the universal ribosomal protein uL5 family. In terms of assembly, part of the 50S ribosomal subunit; part of the 5S rRNA/L5/L18/L25 subcomplex. Contacts the 5S rRNA and the P site tRNA. Forms a bridge to the 30S subunit in the 70S ribosome.

Its function is as follows. This is one of the proteins that bind and probably mediate the attachment of the 5S RNA into the large ribosomal subunit, where it forms part of the central protuberance. In the 70S ribosome it contacts protein S13 of the 30S subunit (bridge B1b), connecting the 2 subunits; this bridge is implicated in subunit movement. Contacts the P site tRNA; the 5S rRNA and some of its associated proteins might help stabilize positioning of ribosome-bound tRNAs. The protein is Large ribosomal subunit protein uL5 of Bordetella avium (strain 197N).